Reading from the N-terminus, the 124-residue chain is Protein MGF 110-4L (124 aa).

Residues 1–18 (MLVIFLGILGLLANQVLG) form the signal peptide. Asn64 carries N-linked (GlcNAc...) asparagine; by host glycosylation. The short motif at 121–124 (KEDL) is the Prevents secretion from ER element.

Belongs to the asfivirus MGF 110 family.

It localises to the virion. Its subcellular location is the host endoplasmic reticulum-Golgi intermediate compartment. Its function is as follows. Causes the redistribution of lumenal ER protein to an enlarged ERGIC compartment. The polypeptide is Protein MGF 110-4L (Ornithodoros (relapsing fever ticks)).